Reading from the N-terminus, the 468-residue chain is Mitochondrial adenyl nucleotide antiporter SLC25A23 (468 aa).

The tract at residues 1-149 is regulatory N-terminal domain; the sequence is MRGSPGDAER…DHFLLHSLEN (149 aa). Residues 1 to 188 lie on the Mitochondrial intermembrane side of the membrane; that stretch reads MRGSPGDAER…EKLTGMWWKQ (188 aa). Positions 9 to 44 constitute an EF-hand 1 domain; sequence ERRQRWGRLFEELDSNKDGRVDVHELRQGLARLGGG. Residues Asp22, Asn24, Asp26, Arg28, and Glu33 each coordinate Ca(2+). Positions 34–67 are disordered; that stretch reads LRQGLARLGGGNPDPGAQQGISSEGDADPDGGLD. Residues 58 to 67 show a composition bias toward acidic residues; that stretch reads GDADPDGGLD. EF-hand domains are found at residues 77–112 and 113–148; these read EREQRLLLMFHSLDRNQDGHIDVSEIQQSFRALGIS and ISLEQAEKILHSMDRDGTMTIDWQEWRDHFLLHSLE. Residues Asp90, Asn92, Asp94, His96, and Glu101 each coordinate Ca(2+). Residues 150–159 form a linker region region; sequence VEDVLYFWKH. The interval 165-468 is C-terminal transmembrane transporter domain; the sequence is IGECLTVPDE…MKQALGVTSR (304 aa). Solcar repeat units lie at residues 183–269, 277–362, and 374–462; these read GMWW…IKRA, LHVQ…LKNW, and PGIL…MKQA. Residues 189-206 traverse the membrane as a helical segment; it reads LVAGAVAGAVSRTGTAPL. Residues 207-243 are Mitochondrial matrix-facing; it reads DRLKVFMQVHASKTNRLNILGGLRSMVLEGGIRSLWR. The chain crosses the membrane as a helical span at residues 244–263; that stretch reads GNGINVLKIAPESAIKFMAY. At 264–286 the chain is on the mitochondrial intermembrane side; the sequence is EQIKRAILGQQETLHVQERFVAG. A helical transmembrane segment spans residues 287 to 300; the sequence is SLAGATAQTIIYPM. At 301-336 the chain is on the mitochondrial matrix side; it reads EVLKTRLTLRRTGQYKGLLDCARRILEREGPRAFYR. A helical membrane pass occupies residues 337 to 356; it reads GYLPNVLGIIPYAGIDLAVY. The Mitochondrial intermembrane portion of the chain corresponds to 357-379; sequence ETLKNWWLQQYSHDSADPGILVL. A helical transmembrane segment spans residues 380–397; sequence LACGTISSTCGQIASYPL. At 398 to 436 the chain is on the mitochondrial matrix side; sequence ALVRTRMQAQASIEGGPQLSMLGLLRHILSQEGMRGLYR. A helical transmembrane segment spans residues 437-456; it reads GIAPNFMKVIPAVSISYVVY. At 457 to 468 the chain is on the mitochondrial intermembrane side; it reads ENMKQALGVTSR.

Belongs to the mitochondrial carrier (TC 2.A.29) family. As to quaternary structure, interacts with MCU. Interacts with MICU1. As to expression, expressed at low levels in most tissues examined, with highest expression in brain, skeletal muscle and pancreas.

It is found in the mitochondrion inner membrane. It catalyses the reaction Mg(2+)(out) + phosphate(in) + ATP(out) = Mg(2+)(in) + phosphate(out) + ATP(in). The catalysed reaction is ADP(out) + phosphate(in) + H(+)(out) = ADP(in) + phosphate(out) + H(+)(in). The enzyme catalyses AMP(out) + phosphate(in) = AMP(in) + phosphate(out). It carries out the reaction phosphate(in) + ATP(out) + 2 H(+)(out) = phosphate(out) + ATP(in) + 2 H(+)(in). It catalyses the reaction dADP(in) + ADP(out) = dADP(out) + ADP(in). The catalysed reaction is Mg(2+)(in) + ADP(out) + ATP(in) + H(+)(out) = Mg(2+)(out) + ADP(in) + ATP(out) + H(+)(in). The enzyme catalyses ADP(out) + diphosphate(in) = ADP(in) + diphosphate(out). It carries out the reaction dAMP(in) + ADP(out) + H(+)(out) = dAMP(out) + ADP(in) + H(+)(in). It catalyses the reaction 3'-AMP(in) + ADP(out) + H(+)(out) = 3'-AMP(out) + ADP(in) + H(+)(in). The catalysed reaction is dAMP(out) + phosphate(in) = dAMP(in) + phosphate(out). The enzyme catalyses 3'-AMP(out) + phosphate(in) = 3'-AMP(in) + phosphate(out). It carries out the reaction dADP(out) + phosphate(in) + H(+)(out) = dADP(in) + phosphate(out) + H(+)(in). With respect to regulation, activated by an increase in cytosolic calcium levels that induce a conformational change of the N-terminal regulatory domain, uncapping the channel and allowing transport. Inhibited by bathophenanthroline, mersalyl, p-hydroxymercuribenzoate, bromcresol purple, tannic acid, pyridoxal 5'-phosphate and p-hydroxymercuribenzoate. Its function is as follows. Electroneutral antiporter that mediates the transport of adenine nucleotides through the inner mitochondrial membrane. Originally identified as an ATP-magnesium/inorganic phosphate antiporter, it also acts as a broad specificity adenyl nucleotide antiporter. By regulating the mitochondrial matrix adenine nucleotide pool could adapt to changing cellular energetic demands and indirectly regulate adenine nucleotide-dependent metabolic pathways. Also acts as a regulator of mitochondrial calcium uptake and can probably transport trace amounts of other divalent metal cations in complex with ATP. In vitro, a low activity is also observed with guanyl and pyrimidine nucleotides. The protein is Mitochondrial adenyl nucleotide antiporter SLC25A23 of Homo sapiens (Human).